We begin with the raw amino-acid sequence, 223 residues long: Retbindin (223 aa).

Residues 1–30 (MANRGHTQPRALAWALGLTLVWILLGACGG) form the signal peptide. 4 disulfide bridges follow: cysteine 73–cysteine 143, cysteine 80–cysteine 120, cysteine 113–cysteine 157, and cysteine 126–cysteine 139.

Belongs to the folate receptor family. Not N-glycosylated.

Its subcellular location is the secreted. The protein localises to the extracellular space. It localises to the extracellular matrix. It is found in the interphotoreceptor matrix. The protein resides in the cell membrane. Riboflavin-binding protein which might have a role in retinal flavin transport. This Canis lupus familiaris (Dog) protein is Retbindin (RTBDN).